The chain runs to 852 residues: Lon protease homolog 2, peroxisomal (852 aa).

At Ser-2 the chain carries N-acetylserine. The 210-residue stretch at 13–222 (LPLLLTHEGV…MTIPLLVRQI (210 aa)) folds into the Lon N-terminal domain. 375–382 (GPPGVGKT) is a binding site for ATP. Positions 651 to 837 (LSQPGVAIGL…DEVLNAAFDG (187 aa)) constitute a Lon proteolytic domain. Residues Ser-743 and Lys-786 contribute to the active site. The Microbody targeting signal signature appears at 850–852 (SKL).

Belongs to the peptidase S16 family. Interacts with PEX5. Interacts with TYSND1. May interact with enzymes involved in beta-oxidation of fatty acids, including ACOX1/AOX. As to expression, widely expressed, with high levels in the liver, kidney and pancreas.

The protein resides in the peroxisome matrix. The enzyme catalyses Hydrolysis of proteins in presence of ATP.. Functionally, ATP-dependent serine protease that mediates the selective degradation of misfolded and unassembled polypeptides in the peroxisomal matrix. Necessary for type 2 peroxisome targeting signal (PTS2)-containing protein processing and facilitates peroxisome matrix protein import. May indirectly regulate peroxisomal fatty acid beta-oxidation through degradation of the self-processed forms of TYSND1. This Homo sapiens (Human) protein is Lon protease homolog 2, peroxisomal.